A 364-amino-acid chain; its full sequence is Peptidoglycan transport system permease protein YejB (364 aa).

The next 6 helical transmembrane spans lie at 9–29 (LALMIPTIVGIMGISFLVIQF), 134–154 (SASLGFWILIISYVISIPLGI), 171–191 (IIIIGYAVPSFLFGILLIVLF), 219–239 (IIDYFWHLTLPLIALSLSAFA), 283–303 (IVIAGFPGAFISAFFTGSLLI), and 325–345 (YPIVFGTLFIFSLMGLVVGLL). Positions 131-350 (LPVSASLGFW…VVGLLSDLIY (220 aa)) constitute an ABC transmembrane type-1 domain.

This sequence belongs to the binding-protein-dependent transport system permease family. In terms of assembly, the complex is composed of one ATP-binding protein (YejF), two transmembrane proteins (YejB and YejE) and a solute-binding protein (YepA or YejA).

Its subcellular location is the cell inner membrane. Part of the ABC transporter complex YejBEF-YepA involved in the uptake of muropeptides, the breakdown products of cell wall peptidoglycan. The import of muropeptides into the cell enables peptidoglycan recycling, which is vital for cell wall integrity in this bacterium. Is also probably part of the ABC transporter complex YejABEF, which is likely involved in broad-spectrum peptide import. Responsible for the translocation of the substrate across the membrane. In Agrobacterium fabrum (strain C58 / ATCC 33970) (Agrobacterium tumefaciens (strain C58)), this protein is Peptidoglycan transport system permease protein YejB.